The sequence spans 84 residues: Putative UPF0320 protein YNL337W (84 aa).

It belongs to the UPF0320 family.

The polypeptide is Putative UPF0320 protein YNL337W (Saccharomyces cerevisiae (strain ATCC 204508 / S288c) (Baker's yeast)).